We begin with the raw amino-acid sequence, 111 residues long: MTLADLKKPTSRASPSTEETVTRVRTPRRENNEILATVESLLGANRLRLRCMDGVVRMGRIPGSMKKKAWIREGDVVIAVPWEFQNEKADVIWKYTRPQVDWLERKGYLKG.

The disordered stretch occupies residues 1-28 (MTLADLKKPTSRASPSTEETVTRVRTPR). The S1-like domain occupies 22–96 (TRVRTPRREN…EKADVIWKYT (75 aa)).

This sequence belongs to the eIF-1A family.

Seems to be required for maximal rate of protein biosynthesis. Enhances ribosome dissociation into subunits and stabilizes the binding of the initiator Met-tRNA(I) to 40 S ribosomal subunits. This chain is Translation initiation factor 1A 1 (eIF1A1), found in Methanosarcina mazei (strain ATCC BAA-159 / DSM 3647 / Goe1 / Go1 / JCM 11833 / OCM 88) (Methanosarcina frisia).